We begin with the raw amino-acid sequence, 246 residues long: 1-(5-phosphoribosyl)-5-[(5-phosphoribosylamino)methylideneamino] imidazole-4-carboxamide isomerase (246 aa).

Residue Asp-8 is the Proton acceptor of the active site. Asp-131 acts as the Proton donor in catalysis.

The protein belongs to the HisA/HisF family.

The protein localises to the cytoplasm. The catalysed reaction is 1-(5-phospho-beta-D-ribosyl)-5-[(5-phospho-beta-D-ribosylamino)methylideneamino]imidazole-4-carboxamide = 5-[(5-phospho-1-deoxy-D-ribulos-1-ylimino)methylamino]-1-(5-phospho-beta-D-ribosyl)imidazole-4-carboxamide. It functions in the pathway amino-acid biosynthesis; L-histidine biosynthesis; L-histidine from 5-phospho-alpha-D-ribose 1-diphosphate: step 4/9. The polypeptide is 1-(5-phosphoribosyl)-5-[(5-phosphoribosylamino)methylideneamino] imidazole-4-carboxamide isomerase (Bordetella bronchiseptica (strain ATCC BAA-588 / NCTC 13252 / RB50) (Alcaligenes bronchisepticus)).